A 318-amino-acid chain; its full sequence is 4-diphosphocytidyl-2-C-methyl-D-erythritol kinase (318 aa).

Residue K13 is part of the active site. 101–111 contacts ATP; the sequence is PVAGGMAGGSA. Residue D143 is part of the active site. The segment at 298-318 is disordered; the sequence is PGARLVTDDRADRPTPPQVHA.

Belongs to the GHMP kinase family. IspE subfamily.

It catalyses the reaction 4-CDP-2-C-methyl-D-erythritol + ATP = 4-CDP-2-C-methyl-D-erythritol 2-phosphate + ADP + H(+). The protein operates within isoprenoid biosynthesis; isopentenyl diphosphate biosynthesis via DXP pathway; isopentenyl diphosphate from 1-deoxy-D-xylulose 5-phosphate: step 3/6. Its function is as follows. Catalyzes the phosphorylation of the position 2 hydroxy group of 4-diphosphocytidyl-2C-methyl-D-erythritol. In Saccharopolyspora erythraea (strain ATCC 11635 / DSM 40517 / JCM 4748 / NBRC 13426 / NCIMB 8594 / NRRL 2338), this protein is 4-diphosphocytidyl-2-C-methyl-D-erythritol kinase.